We begin with the raw amino-acid sequence, 476 residues long: UDP-glycosyltransferase 71C3 (476 aa).

Residues Ser-290, 349-351 (APQ), 366-374 (HCGWNSVLE), and 388-391 (YAEQ) contribute to the UDP-alpha-D-glucose site.

This sequence belongs to the UDP-glycosyltransferase family.

Its function is as follows. Possesses low quercetin 3-O-glucosyltransferase activity in vitro. This is UDP-glycosyltransferase 71C3 (UGT71C3) from Arabidopsis thaliana (Mouse-ear cress).